The following is a 189-amino-acid chain: Ras-like protein 1 (189 aa).

A GTP-binding site is contributed by 10 to 17 (GGGGVGKS). An Effector region motif is present at residues 32-40 (YDPTIEDSY). GTP-binding positions include 57 to 61 (DTAGQ) and 116 to 119 (NKCD). The residue at position 186 (cysteine 186) is a Cysteine methyl ester. Cysteine 186 is lipidated: S-geranylgeranyl cysteine. The propeptide at 187–189 (LLL) is removed in mature form.

Belongs to the small GTPase superfamily. Ras family.

Its subcellular location is the cell membrane. It carries out the reaction GTP + H2O = GDP + phosphate + H(+). Functionally, ras proteins bind GDP/GTP and possess intrinsic GTPase activity. This chain is Ras-like protein 1 (RAS1), found in Physarum polycephalum (Slime mold).